Consider the following 175-residue polypeptide: ATP synthase subunit b (175 aa).

The chain crosses the membrane as a helical span at residues 14-34; sequence LNPNPGLIFWTALTFLIVLVI.

It belongs to the ATPase B chain family. As to quaternary structure, F-type ATPases have 2 components, F(1) - the catalytic core - and F(0) - the membrane proton channel. F(1) has five subunits: alpha(3), beta(3), gamma(1), delta(1), epsilon(1). F(0) has four main subunits: a(1), b(2) and c(10-14). The alpha and beta chains form an alternating ring which encloses part of the gamma chain. F(1) is attached to F(0) by a central stalk formed by the gamma and epsilon chains, while a peripheral stalk is formed by the delta and b chains.

It is found in the cell inner membrane. Functionally, f(1)F(0) ATP synthase produces ATP from ADP in the presence of a proton or sodium gradient. F-type ATPases consist of two structural domains, F(1) containing the extramembraneous catalytic core and F(0) containing the membrane proton channel, linked together by a central stalk and a peripheral stalk. During catalysis, ATP synthesis in the catalytic domain of F(1) is coupled via a rotary mechanism of the central stalk subunits to proton translocation. Component of the F(0) channel, it forms part of the peripheral stalk, linking F(1) to F(0). The polypeptide is ATP synthase subunit b (Chlorobaculum tepidum (strain ATCC 49652 / DSM 12025 / NBRC 103806 / TLS) (Chlorobium tepidum)).